We begin with the raw amino-acid sequence, 292 residues long: 4-hydroxy-tetrahydrodipicolinate synthase (292 aa).

Thr45 is a pyruvate binding site. Catalysis depends on Tyr133, which acts as the Proton donor/acceptor. Lys161 functions as the Schiff-base intermediate with substrate in the catalytic mechanism. Ile203 is a pyruvate binding site.

It belongs to the DapA family. In terms of assembly, homotetramer; dimer of dimers.

Its subcellular location is the cytoplasm. It carries out the reaction L-aspartate 4-semialdehyde + pyruvate = (2S,4S)-4-hydroxy-2,3,4,5-tetrahydrodipicolinate + H2O + H(+). Its pathway is amino-acid biosynthesis; L-lysine biosynthesis via DAP pathway; (S)-tetrahydrodipicolinate from L-aspartate: step 3/4. Catalyzes the condensation of (S)-aspartate-beta-semialdehyde [(S)-ASA] and pyruvate to 4-hydroxy-tetrahydrodipicolinate (HTPA). This is 4-hydroxy-tetrahydrodipicolinate synthase from Sodalis glossinidius (strain morsitans).